Here is a 100-residue protein sequence, read N- to C-terminus: Putative septation protein SpoVG (100 aa).

This sequence belongs to the SpoVG family.

In terms of biological role, could be involved in septation. In Clostridium novyi (strain NT), this protein is Putative septation protein SpoVG.